The sequence spans 332 residues: Ketol-acid reductoisomerase (NADP(+)) (332 aa).

In terms of domain architecture, KARI N-terminal Rossmann spans 2–182; it reads AKVYHDTEVS…GATRAGVLET (181 aa). NADP(+) is bound by residues 25 to 28, arginine 48, serine 53, and 83 to 86; these read YGSQ and DTEQ. Histidine 108 is an active-site residue. Residue glycine 134 participates in NADP(+) binding. In terms of domain architecture, KARI C-terminal knotted spans 183–328; it reads TFKEETETDL…KVLREMMPWL (146 aa). Mg(2+)-binding residues include aspartate 191, glutamate 195, glutamate 227, and glutamate 231. Serine 252 contributes to the substrate binding site.

Belongs to the ketol-acid reductoisomerase family. Requires Mg(2+) as cofactor.

The catalysed reaction is (2R)-2,3-dihydroxy-3-methylbutanoate + NADP(+) = (2S)-2-acetolactate + NADPH + H(+). It catalyses the reaction (2R,3R)-2,3-dihydroxy-3-methylpentanoate + NADP(+) = (S)-2-ethyl-2-hydroxy-3-oxobutanoate + NADPH + H(+). It participates in amino-acid biosynthesis; L-isoleucine biosynthesis; L-isoleucine from 2-oxobutanoate: step 2/4. It functions in the pathway amino-acid biosynthesis; L-valine biosynthesis; L-valine from pyruvate: step 2/4. Functionally, involved in the biosynthesis of branched-chain amino acids (BCAA). Catalyzes an alkyl-migration followed by a ketol-acid reduction of (S)-2-acetolactate (S2AL) to yield (R)-2,3-dihydroxy-isovalerate. In the isomerase reaction, S2AL is rearranged via a Mg-dependent methyl migration to produce 3-hydroxy-3-methyl-2-ketobutyrate (HMKB). In the reductase reaction, this 2-ketoacid undergoes a metal-dependent reduction by NADPH to yield (R)-2,3-dihydroxy-isovalerate. The chain is Ketol-acid reductoisomerase (NADP(+)) from Dictyoglomus turgidum (strain DSM 6724 / Z-1310).